Reading from the N-terminus, the 367-residue chain is MDSSLAQEIAAIDGVELDSEVTFADLTTLRIGGKPRSAVRCQTTEALVSAIKLLDDASLPLLIVGGGSNLVVADGDLDVIAVIIETDDVSINLTDGLLTADAGAVWDDVVHLSVDAGLGGIECLSGIPGSAGATPVQNVGAYGTEVSDVLTRVQLLDRTTHQVSWVDASELDLSYRYSNLKFTNRAVVLAIELQLLTDGLSAPLRFGELGRRLAISEAEPHPRRPVRMVRDAVLELRRAKGMVVEHTDHDTWSAGSFFTNPIVDPALADAVFEKVGEPTMPRFPAGDGKEKLSAAWLIERAGFKKGHPGAGAKASLSTKHTLALTNRGDARASDLVALAKEIRDGVLETFGVTLVPEPVWIGISIDD.

Positions 31 to 198 constitute an FAD-binding PCMH-type domain; it reads IGGKPRSAVR…LAIELQLLTD (168 aa). Arg-176 is an active-site residue. Ser-256 functions as the Proton donor in the catalytic mechanism. Glu-357 is an active-site residue.

Belongs to the MurB family. FAD is required as a cofactor.

The protein resides in the cytoplasm. The enzyme catalyses UDP-N-acetyl-alpha-D-muramate + NADP(+) = UDP-N-acetyl-3-O-(1-carboxyvinyl)-alpha-D-glucosamine + NADPH + H(+). It functions in the pathway cell wall biogenesis; peptidoglycan biosynthesis. In terms of biological role, cell wall formation. This chain is UDP-N-acetylenolpyruvoylglucosamine reductase 2 (murB2), found in Corynebacterium glutamicum (strain ATCC 13032 / DSM 20300 / JCM 1318 / BCRC 11384 / CCUG 27702 / LMG 3730 / NBRC 12168 / NCIMB 10025 / NRRL B-2784 / 534).